The following is a 122-amino-acid chain: Large ribosomal subunit protein uL14 (122 aa).

It belongs to the universal ribosomal protein uL14 family. Part of the 50S ribosomal subunit. Forms a cluster with proteins L3 and L19. In the 70S ribosome, L14 and L19 interact and together make contacts with the 16S rRNA in bridges B5 and B8.

In terms of biological role, binds to 23S rRNA. Forms part of two intersubunit bridges in the 70S ribosome. This is Large ribosomal subunit protein uL14 from Petrotoga mobilis (strain DSM 10674 / SJ95).